The chain runs to 238 residues: Orotidine 5'-phosphate decarboxylase (238 aa).

Residues D13, K35, 62–71, T121, R182, Q191, G211, and R212 contribute to the substrate site; that span reads DLKFHDIPNT. The Proton donor role is filled by K64.

Belongs to the OMP decarboxylase family. Type 1 subfamily. In terms of assembly, homodimer.

The enzyme catalyses orotidine 5'-phosphate + H(+) = UMP + CO2. It participates in pyrimidine metabolism; UMP biosynthesis via de novo pathway; UMP from orotate: step 2/2. Catalyzes the decarboxylation of orotidine 5'-monophosphate (OMP) to uridine 5'-monophosphate (UMP). The polypeptide is Orotidine 5'-phosphate decarboxylase (Saccharophagus degradans (strain 2-40 / ATCC 43961 / DSM 17024)).